The following is a 49-amino-acid chain: Large ribosomal subunit protein bL33 (49 aa).

The protein belongs to the bacterial ribosomal protein bL33 family.

The polypeptide is Large ribosomal subunit protein bL33 (Streptococcus suis (strain 98HAH33)).